A 582-amino-acid chain; its full sequence is Hydrogen peroxide stress regulator 1 (582 aa).

4 disordered regions span residues 24–55 (SPFAPAQSSSPLPSNSCREYSLPSHPSTHNSS), 107–154 (YPSA…GISK), 347–366 (TSYNDTPQQSVTGSYNSGET), and 375–422 (NTSG…GGKS). A compositionally biased stretch (polar residues) spans 107–125 (YPSASFSTSQHPSQVYNDG). Residues 126–143 (STLNSNNTTQQLNNNNGF) are compositionally biased toward low complexity. A compositionally biased stretch (polar residues) spans 375 to 392 (NTSGRSPNSMEATEQIGT). The C2H2-type 1 zinc-finger motif lies at 423-446 (FVCPECSKKFKRSEHLRRHIRSLH). The C2H2-type 2; atypical zinc-finger motif lies at 452–473 (FVCICGKRFSRRDNLRQHERLH).

The protein resides in the nucleus. In terms of biological role, transcription factor that globally supports gene expression in response to hydrogen peroxide. The sequence is that of Hydrogen peroxide stress regulator 1 (hsr1) from Schizosaccharomyces pombe (strain 972 / ATCC 24843) (Fission yeast).